The following is a 381-amino-acid chain: MTGSTFPTDPVALARDLLRCQSVTPADGGAQALLAGVLEGMGFETFHLPFGPADVPTPNLYARLGKGHPALCFAGHTDVVPPGEGWAHDPFAAVIEGDRLYGRGIADMKGGVACFVAAVARRLEQGPLKGSVSLLITGDEEGPAHFGTKPVIEWLAERGELPDFCVLGEPTNPQALGDVIKIGRRGSMNAVVTVHGTQGHVAYPHLADNPVHRLLAAFSELTARELDAGSEWFDPSSLQVTSIDVGNGATNIIPGSAVGRLNIRFNDLHTGAALTAWIEDVVRRHAPQADVQVSISGEAFLTQPGDAVTCLSEAVRSVTGRTPRLDTGGGTSDARFISQYCEVAEFGLVGATMHKRDENVELGTLEDLTRIYLAFMEGYGL.

H76 contributes to the Zn(2+) binding site. D78 is an active-site residue. D107 is a Zn(2+) binding site. The Proton acceptor role is filled by E140. E141, E169, and H354 together coordinate Zn(2+).

It belongs to the peptidase M20A family. DapE subfamily. In terms of assembly, homodimer. Zn(2+) serves as cofactor. The cofactor is Co(2+).

It carries out the reaction N-succinyl-(2S,6S)-2,6-diaminopimelate + H2O = (2S,6S)-2,6-diaminopimelate + succinate. It functions in the pathway amino-acid biosynthesis; L-lysine biosynthesis via DAP pathway; LL-2,6-diaminopimelate from (S)-tetrahydrodipicolinate (succinylase route): step 3/3. Its function is as follows. Catalyzes the hydrolysis of N-succinyl-L,L-diaminopimelic acid (SDAP), forming succinate and LL-2,6-diaminopimelate (DAP), an intermediate involved in the bacterial biosynthesis of lysine and meso-diaminopimelic acid, an essential component of bacterial cell walls. The chain is Succinyl-diaminopimelate desuccinylase from Gluconobacter oxydans (strain 621H) (Gluconobacter suboxydans).